Consider the following 312-residue polypeptide: Mycothiol acetyltransferase (312 aa).

N-acetyltransferase domains follow at residues 8–136 (PIIR…LPMP) and 149–301 (LRLD…HQDH). Position 38 (E38) interacts with 1D-myo-inositol 2-(L-cysteinylamino)-2-deoxy-alpha-D-glucopyranoside. Residues 77–79 (LMV) and 85–90 (RQGIAT) contribute to the acetyl-CoA site. Residues E175, K215, and E226 each contribute to the 1D-myo-inositol 2-(L-cysteinylamino)-2-deoxy-alpha-D-glucopyranoside site. Residues 230 to 232 (LGV) and 237 to 243 (EGKGVGR) each bind acetyl-CoA. Y264 provides a ligand contact to 1D-myo-inositol 2-(L-cysteinylamino)-2-deoxy-alpha-D-glucopyranoside. 269 to 274 (NERVVH) is an acetyl-CoA binding site. Residues 292 to 312 (PAKPARHQDHGRQSSPQERDA) form a disordered region. Positions 297-312 (RHQDHGRQSSPQERDA) are enriched in basic and acidic residues.

Belongs to the acetyltransferase family. MshD subfamily. As to quaternary structure, monomer.

It carries out the reaction 1D-myo-inositol 2-(L-cysteinylamino)-2-deoxy-alpha-D-glucopyranoside + acetyl-CoA = mycothiol + CoA + H(+). Its function is as follows. Catalyzes the transfer of acetyl from acetyl-CoA to desacetylmycothiol (Cys-GlcN-Ins) to form mycothiol. This Propionibacterium freudenreichii subsp. shermanii (strain ATCC 9614 / DSM 4902 / CIP 103027 / NCIMB 8099 / CIRM-BIA1) protein is Mycothiol acetyltransferase.